A 299-amino-acid chain; its full sequence is Circadian clock oscillator protein KaiA (299 aa).

Residues Met1 to Leu169 form the KaiA N-terminal domain. The tract at residues Ser3–Ser135 is psR domain, binds oxidized quinones. A flexible linker region spans residues Gly170–Arg178. Residues Asn179–Arg287 form the KaiA C-terminal domain.

As to quaternary structure, homodimer. The KaiABC complex composition changes during the circadian cycle to control KaiC phosphorylation. Complexes KaiC(6), KaiA(2-4):KaiC(6), KaiB(6):KaiC(6) and KaiC(6):KaiB(6):KaiA(12) are among the most important forms, many form cooperatively. KaiA and CikA bind to the same region of the KaiB(fs) form and therefore compete.

Its function is as follows. Key component of the KaiABC oscillator complex, which constitutes the main circadian regulator in cyanobacteria. Complex composition changes during the circadian cycle to control KaiC phosphorylation. KaiA stimulates KaiC autophosphorylation, while KaiB sequesters KaiA, leading to KaiC autodephosphorylation. KaiA binding to the KaiC CII domain during the subjective day yields KaiA(2-4):KaiC(6) complexes which stimulate KaiC autophosphorylation. Phospho-Ser-431 KaiC accumulation triggers binding of KaiB during the subjective night to form the KaiB(6):KaiC(6) complex, leading to changes in the output regulators CikA and SasA. KaiB(6):KaiC(6) formation exposes a site for KaiA binding on KaiB that sequesters KaiA from KaiC's CII domain, making the KaiC(6):KaiB(6):KaiA(12) complex resulting in KaiC autodephosphorylation. Complete dephosphorylation of KaiC leads to dissociation of KaiA(2):KaiB(1), completing 1 cycle of the Kai oscillator. In terms of biological role, binds oxidized quinones via the N-terminal PsR domain, allowing it to sense redox changes and possibly mediate clock input. This Picosynechococcus sp. (strain ATCC 27264 / PCC 7002 / PR-6) (Agmenellum quadruplicatum) protein is Circadian clock oscillator protein KaiA.